The sequence spans 148 residues: MADFRHIVRVAGVDLDGNKQLRWALTAIKGVGINFATMVCRVAGLDPFMKAGYLTDEQVKKIEEILQDPVAHGIPRWAVNRPKDYETGRDLHLITAKLDMAIREDIMRLRRIRAYRGIRHELGLPVRGQRTRSNFRRGQTVGVSRKKK.

It belongs to the universal ribosomal protein uS13 family. In terms of assembly, part of the 30S ribosomal subunit. Forms a loose heterodimer with protein S19. Forms two bridges to the 50S subunit in the 70S ribosome.

In terms of biological role, located at the top of the head of the 30S subunit, it contacts several helices of the 16S rRNA. In the 70S ribosome it contacts the 23S rRNA (bridge B1a) and protein L5 of the 50S subunit (bridge B1b), connecting the 2 subunits; these bridges are implicated in subunit movement. This chain is Small ribosomal subunit protein uS13, found in Pyrococcus abyssi (strain GE5 / Orsay).